Consider the following 260-residue polypeptide: 3'-5' ssDNA/RNA exonuclease TatD (260 aa).

A divalent metal cation-binding residues include Glu92, His128, and His153.

Belongs to the metallo-dependent hydrolases superfamily. TatD-type hydrolase family. TatD subfamily. Monomer. It depends on Mg(2+) as a cofactor.

It is found in the cytoplasm. In terms of biological role, 3'-5' exonuclease that prefers single-stranded DNA and RNA. May play a role in the H(2)O(2)-induced DNA damage repair. The polypeptide is 3'-5' ssDNA/RNA exonuclease TatD (Pectobacterium carotovorum subsp. carotovorum (strain PC1)).